The sequence spans 1128 residues: Translation initiation factor IF-2 (1128 aa).

Residues 57–519 (NSDKQILSIN…KETTRQRQKR (463 aa)) form a disordered region. Basic and acidic residues predominate over residues 70 to 83 (NKKDNYKQNKEDKS). Residues 100–110 (KKQLLNKPLNK) are compositionally biased toward low complexity. Polar residues predominate over residues 120-146 (QLKNPNKPNIYNSSQSQANLTNQNTKS). Basic and acidic residues predominate over residues 147 to 158 (KPSEHFNKDKKT). The segment covering 182–196 (KNINNNLKSNESSKN) has biased composition (low complexity). Over residues 201 to 214 (GDKRELSLKPDQNR) the composition is skewed to basic and acidic residues. Composition is skewed to polar residues over residues 243 to 267 (KQNNKQNITFKQTVSNRPGTPNRPG) and 386 to 397 (AKTNNQKQNIES). A compositionally biased stretch (basic and acidic residues) spans 432–445 (RKDWDDSAKLEALR). Residues 499–519 (HKSTKQFKKKKKETTRQRQKR) show a composition bias toward basic residues. The region spanning 620–792 (KRPPVITVMG…ILLVSEVEDL (173 aa)) is the tr-type G domain. A G1 region spans residues 629–636 (GHVDHGKT). 629–636 (GHVDHGKT) serves as a coordination point for GTP. Positions 654–658 (GITQH) are G2. Positions 679–682 (DTPG) are G3. GTP contacts are provided by residues 679–683 (DTPGH) and 733–736 (NKID). Residues 733-736 (NKID) are G4. The interval 769-771 (SAI) is G5.

This sequence belongs to the TRAFAC class translation factor GTPase superfamily. Classic translation factor GTPase family. IF-2 subfamily.

It is found in the cytoplasm. In terms of biological role, one of the essential components for the initiation of protein synthesis. Protects formylmethionyl-tRNA from spontaneous hydrolysis and promotes its binding to the 30S ribosomal subunits. Also involved in the hydrolysis of GTP during the formation of the 70S ribosomal complex. The polypeptide is Translation initiation factor IF-2 (Prochlorococcus marinus (strain MIT 9312)).